The sequence spans 337 residues: Neurogenic differentiation factor 6 (337 aa).

Positions 43–82 (LRGKSIKRAPGEETEKEEEEEDREEEDENGLPRRRGLRKK) are disordered. The span at 54–71 (EETEKEEEEEDREEEDEN) shows a compositional bias: acidic residues. The Nuclear localization signal signature appears at 80–86 (RKKKTTK). The 53-residue stretch at 94–146 (FRRQEANARERNRMHGLNDALDNLRKVVPCYSKTQKLSKIETLRLAKNYIWAL) folds into the bHLH domain.

As to quaternary structure, efficient DNA binding requires dimerization with another bHLH protein.

Its subcellular location is the nucleus. In terms of biological role, activates E box-dependent transcription in collaboration with TCF3/E47. May be a trans-acting factor involved in the development and maintenance of the mammalian nervous system. Transactivates the promoter of its own gene. This Homo sapiens (Human) protein is Neurogenic differentiation factor 6 (NEUROD6).